The primary structure comprises 732 residues: Anthranilate synthase (732 aa).

Residues 533–728 form the Glutamine amidotransferase type-1 domain; the sequence is RVLLVDHDDS…MDRLAAGALT (196 aa). An L-glutamine-binding site is contributed by 583-585; it reads GPG. C610 serves as the catalytic Nucleophile; for GATase activity. L-glutamine contacts are provided by residues Q614 and 660–661; that span reads SL. Residues H699 and E701 each act as for GATase activity in the active site.

It carries out the reaction chorismate + L-glutamine = anthranilate + pyruvate + L-glutamate + H(+). Its pathway is amino-acid biosynthesis; L-tryptophan biosynthesis; L-tryptophan from chorismate: step 1/5. The sequence is that of Anthranilate synthase (trpE(G)) from Azospirillum brasilense.